The following is a 450-amino-acid chain: Bifunctional protein GlmU (450 aa).

The segment at Met1 to Arg229 is pyrophosphorylase. Residues Leu8–Gly11, Lys22, Gln72, and Gly77–Thr78 contribute to the UDP-N-acetyl-alpha-D-glucosamine site. Mg(2+) is bound at residue Asp102. UDP-N-acetyl-alpha-D-glucosamine contacts are provided by Gly139, Glu154, and Asn227. Asn227 contributes to the Mg(2+) binding site. Positions Val230 to Asn250 are linker. The interval Gly251–Lys450 is N-acetyltransferase. Residues Arg332 and Lys350 each coordinate UDP-N-acetyl-alpha-D-glucosamine. The active-site Proton acceptor is His362. The UDP-N-acetyl-alpha-D-glucosamine site is built by Tyr365 and Asn376. Acetyl-CoA is bound by residues Asn385–Tyr386, Ala422, and Arg439.

It in the N-terminal section; belongs to the N-acetylglucosamine-1-phosphate uridyltransferase family. This sequence in the C-terminal section; belongs to the transferase hexapeptide repeat family. Homotrimer. It depends on Mg(2+) as a cofactor.

Its subcellular location is the cytoplasm. It carries out the reaction alpha-D-glucosamine 1-phosphate + acetyl-CoA = N-acetyl-alpha-D-glucosamine 1-phosphate + CoA + H(+). The catalysed reaction is N-acetyl-alpha-D-glucosamine 1-phosphate + UTP + H(+) = UDP-N-acetyl-alpha-D-glucosamine + diphosphate. The protein operates within nucleotide-sugar biosynthesis; UDP-N-acetyl-alpha-D-glucosamine biosynthesis; N-acetyl-alpha-D-glucosamine 1-phosphate from alpha-D-glucosamine 6-phosphate (route II): step 2/2. It participates in nucleotide-sugar biosynthesis; UDP-N-acetyl-alpha-D-glucosamine biosynthesis; UDP-N-acetyl-alpha-D-glucosamine from N-acetyl-alpha-D-glucosamine 1-phosphate: step 1/1. It functions in the pathway bacterial outer membrane biogenesis; LPS lipid A biosynthesis. Catalyzes the last two sequential reactions in the de novo biosynthetic pathway for UDP-N-acetylglucosamine (UDP-GlcNAc). The C-terminal domain catalyzes the transfer of acetyl group from acetyl coenzyme A to glucosamine-1-phosphate (GlcN-1-P) to produce N-acetylglucosamine-1-phosphate (GlcNAc-1-P), which is converted into UDP-GlcNAc by the transfer of uridine 5-monophosphate (from uridine 5-triphosphate), a reaction catalyzed by the N-terminal domain. This is Bifunctional protein GlmU from Staphylococcus aureus (strain NCTC 8325 / PS 47).